Reading from the N-terminus, the 262-residue chain is Triosephosphate isomerase (262 aa).

Asn9–Lys11 lines the substrate pocket. Catalysis depends on His99, which acts as the Electrophile. Glu171 (proton acceptor) is an active-site residue. Residues Gly177 and Ser216 each contribute to the substrate site.

Belongs to the triosephosphate isomerase family. Homodimer.

It localises to the cytoplasm. It carries out the reaction D-glyceraldehyde 3-phosphate = dihydroxyacetone phosphate. Its pathway is carbohydrate biosynthesis; gluconeogenesis. It functions in the pathway carbohydrate degradation; glycolysis; D-glyceraldehyde 3-phosphate from glycerone phosphate: step 1/1. Functionally, involved in the gluconeogenesis. Catalyzes stereospecifically the conversion of dihydroxyacetone phosphate (DHAP) to D-glyceraldehyde-3-phosphate (G3P). The sequence is that of Triosephosphate isomerase from Blochmanniella floridana.